We begin with the raw amino-acid sequence, 341 residues long: Probable UDP-glucuronate 4-epimerase (341 aa).

Residue tyrosine 152 is the Proton acceptor of the active site.

Belongs to the NAD(P)-dependent epimerase/dehydratase family. Requires NAD(+) as cofactor.

The enzyme catalyses UDP-alpha-D-glucuronate = UDP-alpha-D-galacturonate. The polypeptide is Probable UDP-glucuronate 4-epimerase (Rhizobium meliloti (strain 1021) (Ensifer meliloti)).